A 72-amino-acid polypeptide reads, in one-letter code: Translation initiation factor IF-1 (72 aa).

One can recognise an S1-like domain in the interval 1-72 (MSKTDVVEIE…TKGRIIWRDK (72 aa)).

This sequence belongs to the IF-1 family. Component of the 30S ribosomal translation pre-initiation complex which assembles on the 30S ribosome in the order IF-2 and IF-3, IF-1 and N-formylmethionyl-tRNA(fMet); mRNA recruitment can occur at any time during PIC assembly.

It is found in the cytoplasm. In terms of biological role, one of the essential components for the initiation of protein synthesis. Stabilizes the binding of IF-2 and IF-3 on the 30S subunit to which N-formylmethionyl-tRNA(fMet) subsequently binds. Helps modulate mRNA selection, yielding the 30S pre-initiation complex (PIC). Upon addition of the 50S ribosomal subunit IF-1, IF-2 and IF-3 are released leaving the mature 70S translation initiation complex. In Lachnoclostridium phytofermentans (strain ATCC 700394 / DSM 18823 / ISDg) (Clostridium phytofermentans), this protein is Translation initiation factor IF-1.